We begin with the raw amino-acid sequence, 211 residues long: Pyridoxine/pyridoxamine 5'-phosphate oxidase (211 aa).

Residues 7–10 and Lys-65 each bind substrate; that span reads RTDY. Residues 60-65, 75-76, Arg-81, and Lys-82 each bind FMN; these read RILLIK and FT. Substrate contacts are provided by Tyr-122, Arg-126, and Ser-130. FMN-binding positions include 139-140 and Trp-183; that span reads QS. 189–191 is a binding site for substrate; sequence RLH. Residue Arg-193 participates in FMN binding.

The protein belongs to the pyridoxamine 5'-phosphate oxidase family. In terms of assembly, homodimer. FMN is required as a cofactor.

It catalyses the reaction pyridoxamine 5'-phosphate + O2 + H2O = pyridoxal 5'-phosphate + H2O2 + NH4(+). It carries out the reaction pyridoxine 5'-phosphate + O2 = pyridoxal 5'-phosphate + H2O2. Its pathway is cofactor metabolism; pyridoxal 5'-phosphate salvage; pyridoxal 5'-phosphate from pyridoxamine 5'-phosphate: step 1/1. It functions in the pathway cofactor metabolism; pyridoxal 5'-phosphate salvage; pyridoxal 5'-phosphate from pyridoxine 5'-phosphate: step 1/1. Functionally, catalyzes the oxidation of either pyridoxine 5'-phosphate (PNP) or pyridoxamine 5'-phosphate (PMP) into pyridoxal 5'-phosphate (PLP). This is Pyridoxine/pyridoxamine 5'-phosphate oxidase from Janthinobacterium sp. (strain Marseille) (Minibacterium massiliensis).